Reading from the N-terminus, the 2544-residue chain is Highly reducing polyketide synthase pkhB (2544 aa).

Positions S9–S438 constitute a Ketosynthase family 3 (KS3) domain. Catalysis depends on for beta-ketoacyl synthase activity residues C182, H317, and H358. Residues V566–E876 form a malonyl-CoA:ACP transacylase (MAT) domain region. The tract at residues H948–V1082 is N-terminal hotdog fold. The interval H948–S1252 is dehydratase (DH) domain. In terms of domain architecture, PKS/mFAS DH spans H948–A1254. H980 (proton acceptor; for dehydratase activity) is an active-site residue. Residues Y1095–A1254 form a C-terminal hotdog fold region. D1165 (proton donor; for dehydratase activity) is an active-site residue. Residues S1398–D1573 form a methyltransferase (CMet) domain region. Positions G1826 to L2142 are enoyl reductase (ER) domain. A ketoreductase (KR) domain region spans residues A2169–S2356. Positions E2462–S2539 constitute a Carrier domain. Position 2499 is an O-(pantetheine 4'-phosphoryl)serine (S2499).

It depends on pantetheine 4'-phosphate as a cofactor.

It participates in secondary metabolite biosynthesis. In terms of biological role, highly reducing polyketide synthase; part of the pkh gene cluster that mediates the biosynthesis of 2,4-dihydroxy-6-[(3E,5E,7E)-2-oxonona-3,5,7-trienyl]benzaldehyde. The highly reducing polyketide synthase pkhB first produces the (2E,4E,6E)-octa-2,4,6-trienyl strater unit for the non-reducing polyketide synthase pkhA. This octatrienoyl starter is then loaded onto the SAT domain of the NR-PKS pkhA to be condensed with 4 malonyl-CoA units to yield 2,4-dihydroxy-6-[(3E,5E,7E)-2-oxonona-3,5,7-trienyl]benzaldehyde. The chain is Highly reducing polyketide synthase pkhB from Emericella nidulans (strain FGSC A4 / ATCC 38163 / CBS 112.46 / NRRL 194 / M139) (Aspergillus nidulans).